The chain runs to 609 residues: Autophagy-related protein 22-1 (609 aa).

4 consecutive transmembrane segments (helical) span residues 35 to 55 (YGWA…PITL), 117 to 137 (TASF…ILII), 151 to 171 (LLLM…LGVV), and 176 to 196 (MVGA…FVLL). The segment covering 214 to 231 (AREPRPALDDSRAQEGHS) has biased composition (basic and acidic residues). Residues 214-240 (AREPRPALDDSRAQEGHSDTTNGIEHG) are disordered. Residue asparagine 244 is glycosylated (N-linked (GlcNAc...) asparagine). A helical transmembrane segment spans residues 287 to 307 (IGIGYIGAIILQIVCILVVIA). N-linked (GlcNAc...) asparagine glycosylation occurs at asparagine 309. Transmembrane regions (helical) follow at residues 317 to 337 (LVLF…ALWL), 381 to 401 (ILLF…VSGT), and 415 to 435 (AALG…AFSW). Asparagine 443 carries an N-linked (GlcNAc...) asparagine glycan. Helical transmembrane passes span 450–470 (IIAC…GFIP), 477–497 (FLGL…GLVM), 522–542 (ALYA…VGII), and 552–572 (AFVF…LVDV).

Belongs to the ATG22 family.

The protein localises to the vacuole membrane. In terms of biological role, vacuolar effluxer which mediate the efflux of amino acids resulting from autophagic degradation. The release of autophagic amino acids allows the maintenance of protein synthesis and viability during nitrogen starvation. This Aspergillus fumigatus (strain ATCC MYA-4609 / CBS 101355 / FGSC A1100 / Af293) (Neosartorya fumigata) protein is Autophagy-related protein 22-1 (atg22-1).